The primary structure comprises 646 residues: Capsid scaffolding protein (646 aa).

Residues His-55, Ser-123, and His-142 each act as charge relay system in the active site. The segment at 336–355 (GDYILVPAAQYNQLVVGQHT) is interaction with pAP. The segment at 421-483 (TKGSDPHVIQ…RPGERRAGRP (63 aa)) is disordered. Residues 445–451 (RYARKRR) carry the Nuclear localization signal motif. 2 stretches are compositionally biased toward basic and acidic residues: residues 452–462 (HDWDATTRDDL) and 471–480 (RSPRPGERRA). Residues 626–646 (TGLEFGRDDADIFVSQMMSAR) form an interaction with major capsid protein region.

The protein belongs to the herpesviridae capsid scaffolding protein family. In terms of assembly, homomultimer. Interacts with major capsid protein. Exists in a monomer-dimer equilibrium with the dimer being the active species. Capsid scaffolding protein is cleaved by assemblin after formation of the spherical procapsid. As a result, the capsid obtains its mature, icosahedral shape. Cleavages occur at two or more sites: release (R-site) and maturation (M-site).

The protein localises to the host cytoplasm. It localises to the host nucleus. The catalysed reaction is Cleaves -Ala-|-Ser- and -Ala-|-Ala- bonds in the scaffold protein.. Its function is as follows. Acts as a scaffold protein by binding major capsid protein in the cytoplasm, inducing the nuclear localization of both proteins. Multimerizes in the nucleus such as major capsid protein forms the icosahedral T=16 capsid. Autocatalytic cleavage releases the assembly protein, and subsequently abolishes interaction with major capsid protein. Cleavages products are evicted from the capsid before or during DNA packaging. Functionally, protease that plays an essential role in virion assembly within the nucleus. Catalyzes the cleavage of the assembly protein after formation of the spherical procapsid. By that cleavage, the capsid matures and gains its icosahedral shape. The cleavage sites seem to include -Ala-Ser-, -Ala-Ala-, as well as Ala-Thr bonds. Assemblin and cleavages products are evicted from the capsid before or during DNA packaging. In terms of biological role, plays a major role in capsid assembly. Acts as a scaffold protein by binding major capsid protein. Multimerizes in the nucleus such as major capsid protein forms the icosahedral T=16 capsid. Cleaved by assemblin after capsid completion. The cleavages products are evicted from the capsid before or during DNA packaging. The protein is Capsid scaffolding protein (35) of Equus caballus (Horse).